The sequence spans 467 residues: UDP-N-acetylmuramate--L-alanine ligase (467 aa).

Gly-114–Thr-120 provides a ligand contact to ATP.

This sequence belongs to the MurCDEF family.

It localises to the cytoplasm. The enzyme catalyses UDP-N-acetyl-alpha-D-muramate + L-alanine + ATP = UDP-N-acetyl-alpha-D-muramoyl-L-alanine + ADP + phosphate + H(+). It functions in the pathway cell wall biogenesis; peptidoglycan biosynthesis. Cell wall formation. The sequence is that of UDP-N-acetylmuramate--L-alanine ligase from Rhodopseudomonas palustris (strain BisB18).